A 186-amino-acid polypeptide reads, in one-letter code: NADH-dependent FMN reductase SfnE (186 aa).

The protein belongs to the SsuE family.

The enzyme catalyses FMNH2 + NAD(+) = FMN + NADH + 2 H(+). In terms of biological role, involved in the dimethyl sulfide degradation pathway. Catalyzes the NADH-dependent reduction of FMN. The chain is NADH-dependent FMN reductase SfnE from Pseudomonas putida (Arthrobacter siderocapsulatus).